The following is a 496-amino-acid chain: Endoglucanase (496 aa).

Residues 1–23 form the signal peptide; the sequence is MGYHSVFIAVFLWSSMVCHNGLA. Asp-93 (nucleophile) is an active-site residue. Residues His-415, Asp-467, and Glu-476 contribute to the active site.

This sequence belongs to the glycosyl hydrolase 9 (cellulase E) family.

The enzyme catalyses Endohydrolysis of (1-&gt;4)-beta-D-glucosidic linkages in cellulose, lichenin and cereal beta-D-glucans.. Involved in ripening fruit process. The polypeptide is Endoglucanase (Phaseolus vulgaris (Kidney bean)).